The following is a 337-amino-acid chain: GTPase Obg (337 aa).

One can recognise an Obg domain in the interval Met1 to Met159. Residues Ala160–Ser322 form the OBG-type G domain. GTP contacts are provided by residues Gly166–Ser173, Phe191–Val195, Asp213–Gly216, Thr280–Asp283, and Ser303–Val305. Mg(2+)-binding residues include Ser173 and Thr193.

Belongs to the TRAFAC class OBG-HflX-like GTPase superfamily. OBG GTPase family. In terms of assembly, monomer. It depends on Mg(2+) as a cofactor.

Its subcellular location is the cytoplasm. An essential GTPase which binds GTP, GDP and possibly (p)ppGpp with moderate affinity, with high nucleotide exchange rates and a fairly low GTP hydrolysis rate. Plays a role in control of the cell cycle, stress response, ribosome biogenesis and in those bacteria that undergo differentiation, in morphogenesis control. This Chlorobium phaeobacteroides (strain DSM 266 / SMG 266 / 2430) protein is GTPase Obg.